The sequence spans 586 residues: Malonate--CoA ligase ACSF3, mitochondrial (586 aa).

The transit peptide at 1–89 directs the protein to the mitochondrion; that stretch reads MPLPYVGMAL…SREICQLRAC (89 aa). Residues 203–211, D457, R471, and K563 contribute to the ATP site; that span reads TSGTTGRPK.

The protein belongs to the ATP-dependent AMP-binding enzyme family.

The protein resides in the mitochondrion. The catalysed reaction is tetracosanoate + ATP + CoA = tetracosanoyl-CoA + AMP + diphosphate. It catalyses the reaction malonate + ATP + CoA = malonyl-CoA + AMP + diphosphate. Its function is as follows. Catalyzes the initial reaction in intramitochondrial fatty acid synthesis, by activating malonate and methylmalonate, but not acetate, into their respective CoA thioester. May have some preference toward very-long-chain substrates. The polypeptide is Malonate--CoA ligase ACSF3, mitochondrial (Bos taurus (Bovine)).